The sequence spans 395 residues: Synaptotagmin-8 (395 aa).

Topologically, residues 1 to 44 are extracellular; that stretch reads MQADRSMKMGHALNPFSTSAPLDATAGPSLIPDLITRIPWPRWT. Residues 45 to 65 traverse the membrane as a helical; Signal-anchor for type III membrane protein segment; sequence LFIAILAAGVLLVSCLLCVIC. The Cytoplasmic segment spans residues 66 to 395; the sequence is CYCHRHRHRK…PRLPLLRPRS (330 aa). C2 domains lie at 113–229 and 241–370; these read QWGR…ESWY and QMGE…AQWH.

This sequence belongs to the synaptotagmin family. In terms of assembly, homodimer or homooligomer. Homodimerization and homooligomerization do not depend on Ca(2+). Interacts with SYNCRIP isoform 2 C-terminus. Binds inositol 1,3,4,5-tetrakisphosphate (IP4). Binds to AP2 in a Ca(2+)-independent manner. Interacts with STX1A, STX1B and STX2; the interaction is Ca(2+)-dependent. In terms of tissue distribution, ubiquitous. Detected in testis and brain. Expressed in primary neurons, neuroendocrine and endocrine cells.

The protein localises to the cytoplasm. It localises to the cell membrane. Its subcellular location is the cytoplasmic vesicle. The protein resides in the secretory vesicle. It is found in the acrosome. In terms of biological role, involved in the trafficking and exocytosis of secretory vesicles in non-neuronal tissues. Mediates Ca(2+)-regulation of exocytosis acrosomal reaction in sperm. May mediate Ca(2+)-regulation of exocytosis in insulin secreted cells. The protein is Synaptotagmin-8 (Syt8) of Mus musculus (Mouse).